A 505-amino-acid chain; its full sequence is Cobyric acid synthase (505 aa).

Residues 251–444 (DIDVAVIKLP…IHGIFDNSEF (194 aa)) enclose the GATase cobBQ-type domain. Catalysis depends on cysteine 332, which acts as the Nucleophile. Residue histidine 436 is part of the active site.

The protein belongs to the CobB/CobQ family. CobQ subfamily.

It participates in cofactor biosynthesis; adenosylcobalamin biosynthesis. Functionally, catalyzes amidations at positions B, D, E, and G on adenosylcobyrinic A,C-diamide. NH(2) groups are provided by glutamine, and one molecule of ATP is hydrogenolyzed for each amidation. The polypeptide is Cobyric acid synthase (Clostridium novyi (strain NT)).